We begin with the raw amino-acid sequence, 254 residues long: Matrix protein (254 aa).

The interaction with M2-1 stretch occupies residues 1–110 (MESYLVDTYQ…KLEFDKLTVC (110 aa)). Positions 110–183 (CEVKTVYLTT…SATVEAAISS (74 aa)) are nuclear targeting and binding to host importin KPNB1. Residues 194 to 206 (IAPYAGLIMIMTM) carry the Nuclear export signal motif. Thr205 carries the phosphothreonine modification.

The protein belongs to the pneumovirinae M protein family. Forms dimers. Forms higher-order oligomers. Interacts with glycoprotein G (via N-terminus). Interacts with protein M2-1; this interaction directs the matrix protein localization to cytoplasmic inclusions comprising viral proteins L, N, P, and M2-1 and mediates the matrix protein association with the nucleocapsid. Post-translationally, phosphorylation is important for oligomerization.

Its subcellular location is the virion. It localises to the host cytoplasm. It is found in the host nucleus. The protein localises to the host cell membrane. Its function is as follows. Plays a crucial role in virus assembly into filaments and budding. Early in infection, localizes in the nucleus where it may inhibit host cell transcription. Later in infection, traffics to the cytoplasm through the action of host CRM1 to associate with inclusion bodies, the site of viral transcription and replication. During virus assembly and budding, acts as a bridge between the nucleocapsid and the lipid bilayer. This chain is Matrix protein (M), found in Homo sapiens (Human).